The primary structure comprises 211 residues: MRVLVVDHPLVAHKLTVLRDKNTPSPVFRQLTEELVTLLAYEATREVRVEEVSIETPVTKTVGTGLVKPTPLVVPILRAGLGMLEGMTRLLPTAEVGFLGMARNEETLEAITYAERLPEDLTGRQVYVLDPMLATGATLREAIKFLFARRALDITCICLLGAPEGIEALREQHEGANVTIVLASIDEGLNEKAYIVPGLGDAGDRLYGVVG.

5-phospho-alpha-D-ribose 1-diphosphate is bound by residues Arg-78, Arg-103, and Asp-130–Thr-138. Residues Ile-195 and Gly-200–Ala-202 each bind uracil. Asp-201 serves as a coordination point for 5-phospho-alpha-D-ribose 1-diphosphate.

It belongs to the UPRTase family. Requires Mg(2+) as cofactor.

The catalysed reaction is UMP + diphosphate = 5-phospho-alpha-D-ribose 1-diphosphate + uracil. It functions in the pathway pyrimidine metabolism; UMP biosynthesis via salvage pathway; UMP from uracil: step 1/1. Its activity is regulated as follows. Allosterically activated by GTP. Catalyzes the conversion of uracil and 5-phospho-alpha-D-ribose 1-diphosphate (PRPP) to UMP and diphosphate. This Renibacterium salmoninarum (strain ATCC 33209 / DSM 20767 / JCM 11484 / NBRC 15589 / NCIMB 2235) protein is Uracil phosphoribosyltransferase.